The primary structure comprises 177 residues: Bifunctional protein PyrR (177 aa).

The PRPP-binding signature appears at 99–111 (VVLVDDVIYKGRT).

It belongs to the purine/pyrimidine phosphoribosyltransferase family. PyrR subfamily.

It carries out the reaction UMP + diphosphate = 5-phospho-alpha-D-ribose 1-diphosphate + uracil. Its function is as follows. Regulates the transcription of the pyrimidine nucleotide (pyr) operon in response to exogenous pyrimidines. In terms of biological role, also displays a weak uracil phosphoribosyltransferase activity which is not physiologically significant. The polypeptide is Bifunctional protein PyrR (Gloeothece citriformis (strain PCC 7424) (Cyanothece sp. (strain PCC 7424))).